The primary structure comprises 566 residues: Putative UDP-glucuronate:xylan alpha-glucuronosyltransferase 5 (566 aa).

A helical; Signal-anchor for type II membrane protein transmembrane segment spans residues 17–37; it reads LILISLSFLGLLLNFKPLFLL. Residues Asp372 and Asp374 each coordinate Mn(2+). Substrate-binding positions include 372 to 374, 401 to 403, 428 to 432, and 475 to 480; these read DAD, NSG, NGGDQ, and HYLGLK. His475 contacts Mn(2+).

It belongs to the glycosyltransferase 8 family. Glycogenin subfamily. Mn(2+) serves as cofactor.

It localises to the golgi apparatus membrane. May be involved in the substitutions of the xylan backbone in stem glucuronoxylan. The sequence is that of Putative UDP-glucuronate:xylan alpha-glucuronosyltransferase 5 (GUX5) from Arabidopsis thaliana (Mouse-ear cress).